A 215-amino-acid chain; its full sequence is Pyrrolidone-carboxylate peptidase (215 aa).

Catalysis depends on residues Glu-80, Cys-143, and His-167.

This sequence belongs to the peptidase C15 family. In terms of assembly, homotetramer.

The protein localises to the cytoplasm. It carries out the reaction Release of an N-terminal pyroglutamyl group from a polypeptide, the second amino acid generally not being Pro.. Its function is as follows. Removes 5-oxoproline from various penultimate amino acid residues except L-proline. This Bacillus mycoides (strain KBAB4) (Bacillus weihenstephanensis) protein is Pyrrolidone-carboxylate peptidase.